Here is a 411-residue protein sequence, read N- to C-terminus: Phosphopentomutase (411 aa).

Residues D14, D306, H311, D347, H348, and H359 each contribute to the Mn(2+) site.

This sequence belongs to the phosphopentomutase family. It depends on Mn(2+) as a cofactor.

It localises to the cytoplasm. It carries out the reaction 2-deoxy-alpha-D-ribose 1-phosphate = 2-deoxy-D-ribose 5-phosphate. The catalysed reaction is alpha-D-ribose 1-phosphate = D-ribose 5-phosphate. It functions in the pathway carbohydrate degradation; 2-deoxy-D-ribose 1-phosphate degradation; D-glyceraldehyde 3-phosphate and acetaldehyde from 2-deoxy-alpha-D-ribose 1-phosphate: step 1/2. Its function is as follows. Isomerase that catalyzes the conversion of deoxy-ribose 1-phosphate (dRib-1-P) and ribose 1-phosphate (Rib-1-P) to deoxy-ribose 5-phosphate (dRib-5-P) and ribose 5-phosphate (Rib-5-P), respectively. The protein is Phosphopentomutase of Lactococcus lactis subsp. lactis (strain IL1403) (Streptococcus lactis).